A 296-amino-acid chain; its full sequence is 4-hydroxy-tetrahydrodipicolinate synthase (296 aa).

Threonine 49 is a pyruvate binding site. Residue tyrosine 137 is the Proton donor/acceptor of the active site. The active-site Schiff-base intermediate with substrate is lysine 166. Pyruvate is bound at residue isoleucine 208.

It belongs to the DapA family. Homotetramer; dimer of dimers.

It is found in the cytoplasm. It carries out the reaction L-aspartate 4-semialdehyde + pyruvate = (2S,4S)-4-hydroxy-2,3,4,5-tetrahydrodipicolinate + H2O + H(+). The protein operates within amino-acid biosynthesis; L-lysine biosynthesis via DAP pathway; (S)-tetrahydrodipicolinate from L-aspartate: step 3/4. Its function is as follows. Catalyzes the condensation of (S)-aspartate-beta-semialdehyde [(S)-ASA] and pyruvate to 4-hydroxy-tetrahydrodipicolinate (HTPA). The chain is 4-hydroxy-tetrahydrodipicolinate synthase from Chlorobium limicola (strain DSM 245 / NBRC 103803 / 6330).